The primary structure comprises 90 residues: MIKNSFISVIPQEEKEENKGSVEFQVFSFTNKIRRLTSHLELHKKDFLSQRGLRKILGKRQRLLTYLLKKNRVRYKKLIGQLDIREPKIH.

Belongs to the universal ribosomal protein uS15 family. Part of the 30S ribosomal subunit.

The protein localises to the plastid. It localises to the chloroplast. This chain is Small ribosomal subunit protein uS15c (rps15), found in Dioscorea elephantipes (Elephant's foot yam).